Here is a 149-residue protein sequence, read N- to C-terminus: Oligosaccharyltransferase complex subunit OSTC (149 aa).

At 1–32 (METLYRVPFLVLECPNLKLKKPPWVHMPSAMT) the chain is on the cytoplasmic side. Residues 33–53 (VYALVVVSYFLITGGIIYDVI) traverse the membrane as a helical segment. Topologically, residues 54–83 (VEPPSVGSMTDEHGHQRPVAFLAYRVNGQY) are extracellular. A helical transmembrane segment spans residues 84–104 (IMEGLASSFLFTMGGLGFIIL). Over 105–117 (DRSNAPNIPKLNR) the chain is Cytoplasmic. Residues 118-138 (FLLLFIGFVCVLLSFFMARVF) traverse the membrane as a helical segment. Residues 139-149 (MRMKLPGYLMG) are Extracellular-facing.

The protein belongs to the OSTC family. Component of STT3A-containing oligosaccharyl transferase (OST-A) complex. STT3A-containing complex assembly occurs through the formation of 3 subcomplexes. Subcomplex 1 contains RPN1 and TMEM258, subcomplex 2 contains the STT3A-specific subunits STT3A, DC2/OSTC, and KCP2 as well as the core subunit OST4, and subcomplex 3 contains RPN2, DAD1, and OST48. The OST-A complex can form stable complexes with the Sec61 complex or with both the Sec61 and TRAP complexes. Interacts with PSEN1 and NCSTN; indicative for an association with the gamma-secretase complex.

The protein localises to the endoplasmic reticulum. The protein resides in the membrane. The protein operates within protein modification; protein glycosylation. In terms of biological role, subunit of STT3A-containing oligosaccharyl transferase (OST-A) complex that catalyzes the initial transfer of a defined glycan (Glc(3)Man(9)GlcNAc(2) in eukaryotes) from the lipid carrier dolichol-pyrophosphate to an asparagine residue within an Asn-X-Ser/Thr consensus motif in nascent polypeptide chains, the first step in protein N-glycosylation. N-glycosylation occurs cotranslationally and the complex associates with the Sec61 complex at the channel-forming translocon complex that mediates protein translocation across the endoplasmic reticulum (ER). Within the OST-A complex, acts as an adapter that anchors the OST-A complex to the Sec61 complex. May be involved in N-glycosylation of APP (amyloid-beta precursor protein). Can modulate gamma-secretase cleavage of APP by enhancing endoprotelysis of PSEN1. In Canis lupus familiaris (Dog), this protein is Oligosaccharyltransferase complex subunit OSTC.